A 509-amino-acid chain; its full sequence is Maturase K (509 aa).

This sequence belongs to the intron maturase 2 family. MatK subfamily.

Its subcellular location is the plastid. The protein resides in the chloroplast. Functionally, usually encoded in the trnK tRNA gene intron. Probably assists in splicing its own and other chloroplast group II introns. This chain is Maturase K, found in Solanum lycopersicum (Tomato).